The primary structure comprises 563 residues: Pentatricopeptide repeat-containing protein At4g39620, chloroplastic (563 aa).

Residues 1–47 constitute a chloroplast transit peptide; that stretch reads MDYLLTSPSSLRFSDFISSIPKETDHKWLRFSVNLGDARRSTRTRIT. PPR repeat units lie at residues 132–166, 167–197, 207–241, 242–276, 277–311, 312–346, 347–381, 382–416, and 417–451; these read DNGVYSKLISVMGKKGQTRMAMWLFSEMKNSGCRP, DASVYNALITAHLHTRDKAKALEKVRGYLDK, NVVTYNILLRAFAQSGKVDQVNALFKDLDMSPVSP, DVYTFNGVMDAYGKNGMIKEMEAVLTRMRSNECKP, DIITFNVLIDSYGKKQEFEKMEQTFKSLMRSKEKP, TLPTFNSMIINYGKARMIDKAEWVFKKMNDMNYIP, SFITYECMIMMYGYCGSVSRAREIFEEVGESDRVL, KASTLNAMLEVYCRNGLYIEADKLFHNASAFRVHP, and DASTYKFLYKAYTKADMKEQVQILMKKMEKDGIVP. Disordered stretches follow at residues 468–501 and 520–551; these read PGSGSENRKSTRSSRSRDSPKGRGGNQLTEFQDK and NLSGHDKGSRDESRKPSQEKQPLFASDQNNMM. Residues 520-537 show a composition bias toward basic and acidic residues; sequence NLSGHDKGSRDESRKPSQ.

It belongs to the PPR family. P subfamily.

Its subcellular location is the plastid. The protein localises to the chloroplast. Its function is as follows. Essential for embryo development. This is Pentatricopeptide repeat-containing protein At4g39620, chloroplastic from Arabidopsis thaliana (Mouse-ear cress).